The chain runs to 495 residues: Protein YhjJ (495 aa).

The signal sequence occupies residues 1–24; it reads MQGTKIRLLAGSLLMLASAGYVQA.

Belongs to the peptidase M16 family.

The protein resides in the periplasm. This is Protein YhjJ (yhjJ) from Salmonella typhi.